The following is a 204-amino-acid chain: uncharacterized protein (204 aa).

A run of 6 helical transmembrane segments spans residues 19 to 39, 42 to 62, 78 to 98, 116 to 136, 143 to 163, and 167 to 187; these read TANPAPLGLLGFGITTILLNL, AGLFPINSMILAMGFAYGGIA, GTVAFGSYGLFWWSLVLLLVI, PVAMASYLFMWGLFTLLMFIA, GIQVIFISLAVLFFLLTAGEI, and ALITAVAGYEGIFTGAAAMYV.

Belongs to the acetate uptake transporter (AceTr) (TC 2.A.96) family.

Its subcellular location is the cell membrane. This is an uncharacterized protein from Methanothermobacter thermautotrophicus (strain ATCC 29096 / DSM 1053 / JCM 10044 / NBRC 100330 / Delta H) (Methanobacterium thermoautotrophicum).